A 179-amino-acid chain; its full sequence is UPF0227 protein Sbal195_2522 (179 aa).

Belongs to the UPF0227 family.

This is UPF0227 protein Sbal195_2522 from Shewanella baltica (strain OS195).